The sequence spans 61 residues: Probable tautomerase stu1128 (61 aa).

Pro-2 serves as the catalytic Proton acceptor; via imino nitrogen.

It belongs to the 4-oxalocrotonate tautomerase family.

The polypeptide is Probable tautomerase stu1128 (Streptococcus thermophilus (strain ATCC BAA-250 / LMG 18311)).